Here is a 642-residue protein sequence, read N- to C-terminus: Eukaryotic translation initiation factor 2A (642 aa).

WD repeat units lie at residues 69–115 (MKLS…KKDC), 186–224 (TYLISPAEHPTICTFTPEKGGKPAQLIIWALSEGKITKK), 289–331 (LTTG…HSLP), and 374–419 (FDAT…VFVK). Residues 485–593 (ISQHPSREAS…KETSPEEKKI (109 aa)) are disordered. Low complexity-rich tracts occupy residues 493-507 (ASSNGNGSKAKAGGA) and 563-583 (TSPDSTPAPSAPASTNAPTNN). Phosphoserine is present on residues Ser-564, Ser-567, and Ser-572.

The protein belongs to the WD repeat EIF2A family. Post-translationally, ubiquitinated, probably leading to its degradation. May explain why it has a short half-life of 17 minutes.

Its function is as follows. Functions in the early steps of protein synthesis of a small number of specific mRNAs. Acts by directing the binding of methionyl-tRNAi to 40S ribosomal subunits. In contrast to the eIF-2 complex, it binds methionyl-tRNAi to 40S subunits in a codon-dependent manner, whereas the eIF-2 complex binds methionyl-tRNAi to 40S subunits in a GTP-dependent manner. Specifically associates with both 40S subunits and 80S ribosomes. This chain is Eukaryotic translation initiation factor 2A, found in Saccharomyces cerevisiae (strain ATCC 204508 / S288c) (Baker's yeast).